We begin with the raw amino-acid sequence, 403 residues long: MAIIHPKVRGFICTTTHPKGCELNVRDQIEATRKLGVREDGPKKVLVIGASSGYGLAARITAAFGFKADTLGVFFEKPGTETKAGTAGWYNSAAFDKFAKAEGLYSKSINGDAFSDEARAKVIELIKNEMGGKVDLVIYSLASPVRKLPQTGEVIRSALKPIGEPYKSTAIDTNKDTIIEASIEPATEQEIADTVTVMGGQDWQLWIDALAGANVLAEGARTVAFSYIGSDITWPIYWHGALGQAKQDLDETALRLDQKLADEVKGGANVAVLKSVVTQASSAIPVMPLYLSMVFKIMQEKGIHEGTQNQLDRMYRDRMYRADGAPADVDEKGRLRLDDWELRDDVQTACKALWPQVTTENLFELTDYAGYKKQFLNLFGFERADVNYDEDVATDVKFDCIEL.

NAD(+) contacts are provided by residues 49-54 (GASSGY), 75-76 (FE), 112-113 (DA), and 141-142 (LA). Tyr-227 serves as a coordination point for substrate. Catalysis depends on Tyr-237, which acts as the Proton donor. Residues Lys-246 and 276-278 (VVT) contribute to the NAD(+) site.

Belongs to the TER reductase family. Monomer.

The enzyme catalyses a 2,3-saturated acyl-[ACP] + NAD(+) = a (2E)-enoyl-[ACP] + NADH + H(+). It participates in lipid metabolism; fatty acid biosynthesis. Its function is as follows. Involved in the final reduction of the elongation cycle of fatty acid synthesis (FAS II). Catalyzes the reduction of a carbon-carbon double bond in an enoyl moiety that is covalently linked to an acyl carrier protein (ACP). The polypeptide is Enoyl-[acyl-carrier-protein] reductase [NADH] (Pseudomonas putida (strain GB-1)).